A 154-amino-acid polypeptide reads, in one-letter code: Style cell-cycle inhibitor 1-A (154 aa).

Composition is skewed to basic and acidic residues over residues 1–11 (MGSDKKTPEEK) and 24–48 (DEVKSKRQNIKGDEERRKEKKDKSK). The segment at 1 to 84 (MGSDKKTPEE…DKSKNKFEEL (84 aa)) is disordered. The segment covering 63–77 (GEKHKTKSHKHKDKS) has biased composition (basic residues).

Specifically expressed in flowers pistils, especially in stigmas and styles. Barely detected in roots, stems, leaves, sepals, petals and stamen.

The protein localises to the nucleus. Functionally, component of the auxin signaling transduction pathway that regulates cell proliferation and differentiation during flowers stigmas and styles development. Involved in the regulation of auxin-related genes. In Nicotiana tabacum (Common tobacco), this protein is Style cell-cycle inhibitor 1-A.